Here is a 485-residue protein sequence, read N- to C-terminus: Acyl transferase 1 (485 aa).

The active-site Proton acceptor is the His-172.

The protein belongs to the plant acyltransferase family. As to expression, highly expressed in young panicles. Expressed in leaf sheaths and panicles.

Involved in defense against pathogens. May contribute to disease resistance by potentiating disease resistance signaling, or producing phytoalexin-like secondary products. The sequence is that of Acyl transferase 1 from Oryza sativa subsp. japonica (Rice).